We begin with the raw amino-acid sequence, 412 residues long: POU domain, class 4, transcription factor 2 (412 aa).

Positions 29-96 are disordered; that stretch reads LHSASPGSSA…SEAMRRACLP (68 aa). The segment covering 31–53 has biased composition (low complexity); that stretch reads SASPGSSAPAAPSASSPSSSSNA. 2 stretches are compositionally biased toward gly residues: residues 54-70 and 78-87; these read GSGG…GGGR and GSGGGGGGGS. The interval 94–240 is required for transcriptional activation; the sequence is CLPTPPSNIF…MHQAALSMAH (147 aa). A POU-IV box motif is present at residues 113 to 122; sequence RAEALAAVDI. The tract at residues 123 to 191 is disordered; that stretch reads VSQSKSHHHH…HHHHQPHQAL (69 aa). A compositionally biased stretch (basic residues) spans 127–138; that stretch reads KSHHHHPPHHSP. Low complexity predominate over residues 152–169; sequence PCTSAASSSSVPISHPSA. Residues 173–187 show a composition bias toward basic residues; sequence THHHHHHHHHHHHQP. The short motif at 174 to 188 is the Nuclear speckle targeting signal element; the sequence is HHHHHHHHHHHHQPH. A required for DNA-binding and transcriptional repression region spans residues 241–412; the sequence is AHGLPSHMGC…QKRMKYSAGI (172 aa). The region spanning 253–330 is the POU-specific domain; that stretch reads DVDADPRDLE…ILQAWLEEAE (78 aa). Positions 348–407 form a DNA-binding region, homeobox; that stretch reads KKRKRTSIAAPEKRSLEAYFAIQPRPSSEKIAAIAEKLDLKKNVVRVWFCNQRQKQKRMK.

It belongs to the POU transcription factor family. Class-4 subfamily. Interacts with POU4F1; this interaction inhibits both POU4F1 DNA-binding and transcriptional activities. Interacts (C-terminus) with ESR1 (via DNA-binding domain); this interaction increases the estrogen receptor ESR1 transcriptional activity in a DNA- and ligand 17-beta-estradiol-independent manner. Interacts (via C-terminus) with TP53 (via N-terminus). Interacts with DLX1 (via homeobox DNA-binding domain); this interaction suppresses DLX1-mediated transcriptional activity in postnatal retina enhancing retinal ganglion cell (RGC) differentiation. Interacts with DLX2 (via homeobox DNA-binding domain); this interaction enhances RGC differentiation. Interacts (via C-terminus) with ISL1 (via C-terminus). Interacts with ISL2. Interacts with LHX2. Expressed in the heart, brain and spinal cord. Expressed in cardiomyocytes (at protein level). Expressed in brain and spinal cord. Expressed in dorsal root ganglion (RGD) neurons.

It is found in the nucleus. The protein resides in the nucleus speckle. Its subcellular location is the cytoplasm. Tissue-specific DNA-binding transcription factor involved in the development and differentiation of target cells. Functions either as activator or repressor modulating the rate of target gene transcription through RNA polymerase II enzyme in a promoter-dependent manner. Binds to the consensus octamer motif 5'-AT[A/T]A[T/A]T[A/T]A-3' of promoter of target genes. Plays a fundamental role in the gene regulatory network essential for retinal ganglion cell (RGC) differentiation. Binds to an octamer site to form a ternary complex with ISL1; cooperates positively with ISL1 and ISL2 to potentiate transcriptional activation of RGC target genes being involved in RGC fate commitment in the developing retina and RGC axon formation and pathfinding. Inhibits DLX1 and DLX2 transcriptional activities preventing DLX1- and DLX2-mediated ability to promote amacrine cell fate specification. In cooperation with TP53 potentiates transcriptional activation of BAX promoter activity increasing neuronal cell apoptosis. Negatively regulates BAX promoter activity in the absence of TP53. Acts as a transcriptional coactivator via its interaction with the transcription factor ESR1 by enhancing its effect on estrogen response element (ERE)-containing promoter. Antagonizes the transcriptional stimulatory activity of POU4F1 by preventing its binding to an octamer motif. Involved in TNFSF11-mediated terminal osteoclast differentiation. This is POU domain, class 4, transcription factor 2 from Rattus norvegicus (Rat).